The sequence spans 190 residues: LOB domain-containing protein 1 (190 aa).

The span at 1-11 (MESKSDASVAT) shows a compositional bias: polar residues. The interval 1-27 (MESKSDASVATTPIISSSSSPPPSLSP) is disordered. The 102-residue stretch at 32 to 133 (SPCAACKILR…AQLAKAQVEM (102 aa)) folds into the LOB domain.

This sequence belongs to the LOB domain-containing protein family. In terms of tissue distribution, expressed in young shoots, roots, stems, leaves and flowers.

This Arabidopsis thaliana (Mouse-ear cress) protein is LOB domain-containing protein 1 (LBD1).